We begin with the raw amino-acid sequence, 351 residues long: Phosphate acyltransferase (351 aa).

The protein belongs to the PlsX family. Homodimer. Probably interacts with PlsY.

It is found in the cytoplasm. The catalysed reaction is a fatty acyl-[ACP] + phosphate = an acyl phosphate + holo-[ACP]. It functions in the pathway lipid metabolism; phospholipid metabolism. Catalyzes the reversible formation of acyl-phosphate (acyl-PO(4)) from acyl-[acyl-carrier-protein] (acyl-ACP). This enzyme utilizes acyl-ACP as fatty acyl donor, but not acyl-CoA. This Paramagnetospirillum magneticum (strain ATCC 700264 / AMB-1) (Magnetospirillum magneticum) protein is Phosphate acyltransferase.